The chain runs to 338 residues: MLGRCFPPNTKEKQQLRMIKLCDPAESELSPFLITLTLAVLLAEYLTGIIANGFITAIHAAEWVQNKSVSTSGRILVFLSVSRIALQSLMMLEITISSTSLSFYSEDAVYYAFKISFIFLNFCSLWFAAWLSFFYFVKIANFSYPLFLKLRWRISGLIPWLLWLSVFISFSHSMFCINICTGYCDNSFPIHSSNSTEKTYFSEISVVSLAFFFNLGIVIPLIMFILAAILLILSLKRHTLHMGSNATGSKDPSMEAHIGAIKATSYFLILYIFNAVALFIYLSNMFDINSLWNTLCQIIMAAYPASHSILLIKDNPGLRRAWKQLQHRLHLYPKQWTL.

Topologically, residues 1–30 are extracellular; the sequence is MLGRCFPPNTKEKQQLRMIKLCDPAESELS. A helical membrane pass occupies residues 31–51; sequence PFLITLTLAVLLAEYLTGIIA. Topologically, residues 52–74 are cytoplasmic; that stretch reads NGFITAIHAAEWVQNKSVSTSGR. Residues 75–95 traverse the membrane as a helical segment; the sequence is ILVFLSVSRIALQSLMMLEIT. Residues 96 to 116 lie on the Extracellular side of the membrane; it reads ISSTSLSFYSEDAVYYAFKIS. Residues 117 to 137 form a helical membrane-spanning segment; that stretch reads FIFLNFCSLWFAAWLSFFYFV. The Cytoplasmic portion of the chain corresponds to 138–156; it reads KIANFSYPLFLKLRWRISG. Residues 157-177 form a helical membrane-spanning segment; it reads LIPWLLWLSVFISFSHSMFCI. Over 178 to 205 the chain is Extracellular; the sequence is NICTGYCDNSFPIHSSNSTEKTYFSEIS. An N-linked (GlcNAc...) asparagine glycan is attached at Asn194. Residues 206-226 form a helical membrane-spanning segment; that stretch reads VVSLAFFFNLGIVIPLIMFIL. At 227–262 the chain is on the cytoplasmic side; it reads AAILLILSLKRHTLHMGSNATGSKDPSMEAHIGAIK. Residues 263–283 form a helical membrane-spanning segment; that stretch reads ATSYFLILYIFNAVALFIYLS. Residues 284–291 lie on the Extracellular side of the membrane; that stretch reads NMFDINSL. A helical membrane pass occupies residues 292-312; the sequence is WNTLCQIIMAAYPASHSILLI. Over 313–338 the chain is Cytoplasmic; the sequence is KDNPGLRRAWKQLQHRLHLYPKQWTL.

It belongs to the G-protein coupled receptor T2R family.

It localises to the membrane. Its function is as follows. Receptor that may play a role in the perception of bitterness and is gustducin-linked. May play a role in sensing the chemical composition of the gastrointestinal content. The activity of this receptor may stimulate alpha gustducin, mediate PLC-beta-2 activation and lead to the gating of TRPM5. This Macaca mulatta (Rhesus macaque) protein is Taste receptor type 2 member 39 (TAS2R39).